Reading from the N-terminus, the 1810-residue chain is Trinucleotide repeat-containing gene 6B protein (1810 aa).

Residues 1 to 22 are compositionally biased toward acidic residues; sequence MQTNEGEVEEESSSQVEQEDFV. Disordered stretches follow at residues 1–221, 235–1080, 1141–1196, and 1293–1329; these read MQTN…PNPI, EEWP…KKQM, MRKD…SSPG, and ALQQ…NMVP. The stretch at 33–75 forms a coiled coil; sequence GEESKQEKEQEREEQLMEDKKRKKEDKKKKEATQKVTEQKTKV. Basic and acidic residues-rich tracts occupy residues 34–52 and 60–77; these read EESK…MEDK and KKKE…KVPE. The tract at residues 37–1028 is interaction with argonaute proteins; it reads KQEKEQEREE…AMKPNSKSMQ (992 aa). The segment covering 88 to 106 has biased composition (low complexity); that stretch reads AASPIGSSPSPPVNGGNNA. A compositionally biased stretch (basic and acidic residues) spans 123–139; it reads MPREVPPRFRCQQDHKV. Positions 165-174 are enriched in low complexity; sequence APGANPNNNA. Polar residues predominate over residues 180 to 190; the sequence is LLQSESGTAPE. Composition is skewed to low complexity over residues 207-220 and 248-260; these read GPGA…SPNP and SSEN…SASN. Composition is skewed to polar residues over residues 261–290 and 306–327; these read PGSE…SGNE and QPPN…TSGQ. Composition is skewed to low complexity over residues 335-346, 363-380, and 416-425; these read GFSNFNPNSNPS, ETES…GQAS, and NSLNLSSPNP. Polar residues predominate over residues 438 to 451; the sequence is GNTSRSTDAPSQST. The segment covering 475–486 has biased composition (low complexity); it reads SGQSNSGNNGNN. Polar residues-rich tracts occupy residues 504-528, 564-575, 611-623, and 655-667; these read GSKS…PQDN, GPNQPNSSTGAW, TGSN…SDSH, and LSNT…QIKQ. Over residues 675-688 the composition is skewed to basic and acidic residues; the sequence is EVPRPEGKSDKGTE. Polar residues-rich tracts occupy residues 774–783 and 793–804; these read QPNQGWTSGK and VKNNNWESSANK. A compositionally biased stretch (gly residues) spans 809-824; it reads WGEGGQNEIGTWGNGG. Residues 846 to 857 are compositionally biased toward polar residues; sequence TGRQPNSWNKQH. Ser913 is modified (phosphoserine). Composition is skewed to polar residues over residues 934–950, 964–975, 1004–1027, 1057–1072, and 1175–1195; these read NSYN…NSQG, TGKSASVWSKST, ASTT…SKSM, TAGS…SASW, and GNST…SSSP. A silencing domain; interaction with CNOT1 and PAN3 region spans residues 1191–1700; the sequence is LSSSPGLRAQ…LAEFATEDEV (510 aa). Low complexity predominate over residues 1295 to 1307; it reads QQQQQQQQQQQRQ. Ser1409 carries the phosphoserine modification. Thr1426 is modified (phosphothreonine). Residue Ser1438 is modified to Phosphoserine. Phosphothreonine is present on Thr1441. Residues 1449–1467 are PABPC1-interacting motif-2 (PAM2); the sequence is SNASWPPEFQPGVPWKGIQ. The interval 1568–1619 is disordered; sequence SSRNTTPLTRPPPGLTNPKPASPWSSTAPRSVRGWGTQDSRIASASTWSDGG. A compositionally biased stretch (polar residues) spans 1604–1617; sequence TQDSRIASASTWSD. The region spanning 1625–1697 is the RRM domain; that stretch reads YWLVLHNLTP…TTILAEFATE (73 aa). 2 disordered regions span residues 1706 to 1740 and 1786 to 1810; these read QAQP…GPAL and EDPH…SDSI. Residues 1722–1733 are compositionally biased toward polar residues; sequence GWQSLETSQNQA. Residues 1792–1801 show a composition bias toward low complexity; the sequence is GSPAPLLPGD. Phosphoserine occurs at positions 1793 and 1809.

It belongs to the GW182 family. As to quaternary structure, interacts with AGO1, AGO2, AGO3 and AGO4. Interacts with CNOT1; the interaction mediates the association with the CCR4-NOT complex. Interacts with PAN3; the interaction mediates the association with the PAN complex. Interacts with MOV10; the interaction is direct and RNA-dependent.

It is found in the cytoplasm. The protein localises to the P-body. Functionally, plays a role in RNA-mediated gene silencing by both micro-RNAs (miRNAs) and short interfering RNAs (siRNAs). Required for miRNA-dependent translational repression and siRNA-dependent endonucleolytic cleavage of complementary mRNAs by argonaute family proteins. As scaffolding protein associates with argonaute proteins bound to partially complementary mRNAs and simultaneously can recruit CCR4-NOT and PAN deadenylase complexes. This is Trinucleotide repeat-containing gene 6B protein (Tnrc6b) from Mus musculus (Mouse).